The chain runs to 24 residues: Acidic phospholipase A2 4 (24 aa).

This sequence belongs to the phospholipase A2 family. Group II subfamily. Requires Ca(2+) as cofactor. Expressed by the venom gland.

It localises to the secreted. It catalyses the reaction a 1,2-diacyl-sn-glycero-3-phosphocholine + H2O = a 1-acyl-sn-glycero-3-phosphocholine + a fatty acid + H(+). PLA2 catalyzes the calcium-dependent hydrolysis of the 2-acyl groups in 3-sn-phosphoglycerides. In Trimeresurus stejnegeri (Chinese green tree viper), this protein is Acidic phospholipase A2 4.